A 360-amino-acid polypeptide reads, in one-letter code: Chorismate synthase (360 aa).

NADP(+)-binding residues include arginine 48 and arginine 54. Residues 125–127 (RSS), 246–247 (NA), glycine 286, 301–305 (KPTSS), and arginine 327 contribute to the FMN site.

The protein belongs to the chorismate synthase family. As to quaternary structure, homotetramer. FMNH2 serves as cofactor.

It carries out the reaction 5-O-(1-carboxyvinyl)-3-phosphoshikimate = chorismate + phosphate. It functions in the pathway metabolic intermediate biosynthesis; chorismate biosynthesis; chorismate from D-erythrose 4-phosphate and phosphoenolpyruvate: step 7/7. In terms of biological role, catalyzes the anti-1,4-elimination of the C-3 phosphate and the C-6 proR hydrogen from 5-enolpyruvylshikimate-3-phosphate (EPSP) to yield chorismate, which is the branch point compound that serves as the starting substrate for the three terminal pathways of aromatic amino acid biosynthesis. This reaction introduces a second double bond into the aromatic ring system. The protein is Chorismate synthase of Actinobacillus pleuropneumoniae serotype 5b (strain L20).